A 230-amino-acid chain; its full sequence is Large ribosomal subunit protein uL1 (230 aa).

This sequence belongs to the universal ribosomal protein uL1 family. Part of the 50S ribosomal subunit.

Its function is as follows. Binds directly to 23S rRNA. The L1 stalk is quite mobile in the ribosome, and is involved in E site tRNA release. In terms of biological role, protein L1 is also a translational repressor protein, it controls the translation of the L11 operon by binding to its mRNA. The polypeptide is Large ribosomal subunit protein uL1 (Thermoanaerobacter sp. (strain X514)).